Reading from the N-terminus, the 256-residue chain is Tryptophan synthase alpha chain (256 aa).

Active-site proton acceptor residues include Glu-51 and Asp-62.

This sequence belongs to the TrpA family. In terms of assembly, tetramer of two alpha and two beta chains.

It catalyses the reaction (1S,2R)-1-C-(indol-3-yl)glycerol 3-phosphate + L-serine = D-glyceraldehyde 3-phosphate + L-tryptophan + H2O. The protein operates within amino-acid biosynthesis; L-tryptophan biosynthesis; L-tryptophan from chorismate: step 5/5. In terms of biological role, the alpha subunit is responsible for the aldol cleavage of indoleglycerol phosphate to indole and glyceraldehyde 3-phosphate. This is Tryptophan synthase alpha chain from Solidesulfovibrio magneticus (strain ATCC 700980 / DSM 13731 / RS-1) (Desulfovibrio magneticus).